We begin with the raw amino-acid sequence, 457 residues long: F-box only protein 13 (457 aa).

The F-box domain occupies 64–110 (EFPMDDLNDDVLERVLSWLPTSCFFRMSSVCKRWKSSQTSKSFKLAC).

The protein is F-box only protein 13 (FBX13) of Arabidopsis thaliana (Mouse-ear cress).